We begin with the raw amino-acid sequence, 334 residues long: Anthranilate phosphoribosyltransferase (334 aa).

5-phospho-alpha-D-ribose 1-diphosphate is bound by residues glycine 79, 82–83 (GD), serine 87, 89–92 (NIST), 107–115 (KAGNRSISS), and serine 119. Glycine 79 provides a ligand contact to anthranilate. Serine 91 contacts Mg(2+). Residue asparagine 110 participates in anthranilate binding. Position 165 (arginine 165) interacts with anthranilate. Mg(2+) is bound by residues aspartate 224 and glutamate 225.

This sequence belongs to the anthranilate phosphoribosyltransferase family. Homodimer. Mg(2+) serves as cofactor.

The enzyme catalyses N-(5-phospho-beta-D-ribosyl)anthranilate + diphosphate = 5-phospho-alpha-D-ribose 1-diphosphate + anthranilate. It functions in the pathway amino-acid biosynthesis; L-tryptophan biosynthesis; L-tryptophan from chorismate: step 2/5. In terms of biological role, catalyzes the transfer of the phosphoribosyl group of 5-phosphorylribose-1-pyrophosphate (PRPP) to anthranilate to yield N-(5'-phosphoribosyl)-anthranilate (PRA). The polypeptide is Anthranilate phosphoribosyltransferase (Streptococcus thermophilus (strain CNRZ 1066)).